A 149-amino-acid chain; its full sequence is UPF0102 protein Bpro_0391 (149 aa).

The disordered stretch occupies residues 1–30 (MWFSRKQVVKPPPDGSRAQPGQVTTKSRGD).

It belongs to the UPF0102 family.

This chain is UPF0102 protein Bpro_0391, found in Polaromonas sp. (strain JS666 / ATCC BAA-500).